A 229-amino-acid chain; its full sequence is Biosynthetic peptidoglycan transglycosylase (229 aa).

The helical transmembrane segment at 10–30 (LLLALVLVVLYQFWIFMHILW) threads the bilayer.

The protein belongs to the glycosyltransferase 51 family.

It is found in the cell inner membrane. It carries out the reaction [GlcNAc-(1-&gt;4)-Mur2Ac(oyl-L-Ala-gamma-D-Glu-L-Lys-D-Ala-D-Ala)](n)-di-trans,octa-cis-undecaprenyl diphosphate + beta-D-GlcNAc-(1-&gt;4)-Mur2Ac(oyl-L-Ala-gamma-D-Glu-L-Lys-D-Ala-D-Ala)-di-trans,octa-cis-undecaprenyl diphosphate = [GlcNAc-(1-&gt;4)-Mur2Ac(oyl-L-Ala-gamma-D-Glu-L-Lys-D-Ala-D-Ala)](n+1)-di-trans,octa-cis-undecaprenyl diphosphate + di-trans,octa-cis-undecaprenyl diphosphate + H(+). It participates in cell wall biogenesis; peptidoglycan biosynthesis. Its function is as follows. Peptidoglycan polymerase that catalyzes glycan chain elongation from lipid-linked precursors. The polypeptide is Biosynthetic peptidoglycan transglycosylase (Methylobacillus flagellatus (strain ATCC 51484 / DSM 6875 / VKM B-1610 / KT)).